A 273-amino-acid chain; its full sequence is MPTQLQRPLARLLALALLVLLARAAEDEPPFCAVRNRSTGSYIDLSPLASNVSGTPPNWLVRGWQYGANFTLGVCTSPLGDGPAAYYSDTGRRVSIGRVATTPRYTGKKLTLTYEGGDLCPNRVDRKSSLLYFVCDRDIHTIAQVSLLGVLHNCSYLFEVRSVHACAAARAAGDRSVLGIFAAILLVFAAVELARRCCAAPLRRRFRPDFPADRPRWAPAPTGWAARTRAFFARAAEPRQAIKLASSPPGHPASDMEAQNTLLDSLDVRSSGA.

An N-terminal signal peptide occupies residues 1-24 (MPTQLQRPLARLLALALLVLLARA). Over 25 to 176 (AEDEPPFCAV…AAARAAGDRS (152 aa)) the chain is Lumenal. In terms of domain architecture, MRH spans 30–168 (PFCAVRNRST…EVRSVHACAA (139 aa)). Cystine bridges form between C32-C75, C120-C154, and C135-C166. 4 N-linked (GlcNAc...) asparagine glycosylation sites follow: N36, N51, N69, and N153. Residues 177–194 (VLGIFAAILLVFAAVELA) traverse the membrane as a helical segment. The Cytoplasmic portion of the chain corresponds to 195-273 (RRCCAAPLRR…DSLDVRSSGA (79 aa)).

The protein belongs to the MRL1/IGF2R family.

It is found in the golgi apparatus. The protein resides in the trans-Golgi network membrane. The protein localises to the endosome membrane. Its function is as follows. Sorting receptor involved in the transport of vacuolar enzymes from the Golgi complex to the vacuole. This Eremothecium gossypii (strain ATCC 10895 / CBS 109.51 / FGSC 9923 / NRRL Y-1056) (Yeast) protein is Mannose 6-phosphate receptor-like protein 1 (MRL1).